A 193-amino-acid chain; its full sequence is Xanthine phosphoribosyltransferase (193 aa).

Xanthine is bound by residues Leu-20 and Thr-27. Residue 128–132 (ANGQA) participates in 5-phospho-alpha-D-ribose 1-diphosphate binding. Lys-156 provides a ligand contact to xanthine.

This sequence belongs to the purine/pyrimidine phosphoribosyltransferase family. Xpt subfamily. In terms of assembly, homodimer.

It localises to the cytoplasm. The catalysed reaction is XMP + diphosphate = xanthine + 5-phospho-alpha-D-ribose 1-diphosphate. It participates in purine metabolism; XMP biosynthesis via salvage pathway; XMP from xanthine: step 1/1. Its function is as follows. Converts the preformed base xanthine, a product of nucleic acid breakdown, to xanthosine 5'-monophosphate (XMP), so it can be reused for RNA or DNA synthesis. The chain is Xanthine phosphoribosyltransferase from Streptococcus agalactiae serotype Ia (strain ATCC 27591 / A909 / CDC SS700).